Here is a 282-residue protein sequence, read N- to C-terminus: 3-methyl-2-oxobutanoate hydroxymethyltransferase (282 aa).

Residues aspartate 44 and aspartate 83 each contribute to the Mg(2+) site. 3-methyl-2-oxobutanoate is bound by residues 44 to 45, aspartate 83, and lysine 113; that span reads DS. Glutamate 115 serves as a coordination point for Mg(2+). Catalysis depends on glutamate 182, which acts as the Proton acceptor.

It belongs to the PanB family. Homodecamer; pentamer of dimers. Requires Mg(2+) as cofactor.

The protein localises to the cytoplasm. The catalysed reaction is 3-methyl-2-oxobutanoate + (6R)-5,10-methylene-5,6,7,8-tetrahydrofolate + H2O = 2-dehydropantoate + (6S)-5,6,7,8-tetrahydrofolate. The protein operates within cofactor biosynthesis; (R)-pantothenate biosynthesis; (R)-pantoate from 3-methyl-2-oxobutanoate: step 1/2. Its function is as follows. Catalyzes the reversible reaction in which hydroxymethyl group from 5,10-methylenetetrahydrofolate is transferred onto alpha-ketoisovalerate to form ketopantoate. The protein is 3-methyl-2-oxobutanoate hydroxymethyltransferase of Dehalococcoides mccartyi (strain ATCC BAA-2266 / KCTC 15142 / 195) (Dehalococcoides ethenogenes (strain 195)).